We begin with the raw amino-acid sequence, 355 residues long: Peptide chain release factor 1 (355 aa).

Glutamine 233 carries the N5-methylglutamine modification. Positions 280–293 (ERRKKEQERADSRR) are enriched in basic and acidic residues. The tract at residues 280-308 (ERRKKEQERADSRRGQVGSGDRSERIRTY) is disordered.

The protein belongs to the prokaryotic/mitochondrial release factor family. In terms of processing, methylated by PrmC. Methylation increases the termination efficiency of RF1.

Its subcellular location is the cytoplasm. Functionally, peptide chain release factor 1 directs the termination of translation in response to the peptide chain termination codons UAG and UAA. This is Peptide chain release factor 1 from Rickettsia peacockii (strain Rustic).